Consider the following 71-residue polypeptide: MAVEKTNSSSSLAEVIDRILDKGIVIDAWARVSLVGIELLAIEARVVIASVETYLKYAEAVGLTQXAXXAX.

An alpha helix 1 region spans residues 12–22; sequence LAEVIDRILDK. A beta-strand 1 region spans residues 26–34; it reads IDAWARVSL. Residues 35–37 form a beta turn region; sequence VGI. The segment at 38-46 is beta-strand 2; it reads ELLAIEARV. The interval 51–70 is alpha helix 2; the sequence is VETYLKYAEAVGLTQXAXXA.

This sequence belongs to the gas vesicle GvpA family. The gas vesicle shell is 2 nm thick and consists of a single layer of this protein. It forms helical ribs nearly perpendicular to the long axis of the vesicle.

Its subcellular location is the gas vesicle shell. Gas vesicles are hollow, gas filled proteinaceous nanostructures found in some microorganisms. During planktonic growth they allow positioning of the organism at a favorable depth for light or nutrient acquisition. GvpA forms the protein shell. In Microcystis sp. (strain BC 84/1), this protein is Gas vesicle protein A.